Consider the following 259-residue polypeptide: uncharacterized protein (259 aa).

In terms of domain architecture, Radical SAM core spans 19–249 (TKIPGAKYVI…DEVINTIKKK (231 aa)). The [4Fe-4S] cluster site is built by cysteine 34, cysteine 38, and cysteine 41.

[4Fe-4S] cluster serves as cofactor.

This is an uncharacterized protein from Methanocaldococcus jannaschii (strain ATCC 43067 / DSM 2661 / JAL-1 / JCM 10045 / NBRC 100440) (Methanococcus jannaschii).